We begin with the raw amino-acid sequence, 450 residues long: Phosphoglucosamine mutase (450 aa).

Residue S101 is the Phosphoserine intermediate of the active site. Positions 101, 242, 244, and 246 each coordinate Mg(2+). S101 is subject to Phosphoserine.

This sequence belongs to the phosphohexose mutase family. It depends on Mg(2+) as a cofactor. In terms of processing, activated by phosphorylation.

The catalysed reaction is alpha-D-glucosamine 1-phosphate = D-glucosamine 6-phosphate. In terms of biological role, catalyzes the conversion of glucosamine-6-phosphate to glucosamine-1-phosphate. The sequence is that of Phosphoglucosamine mutase from Rhodopseudomonas palustris (strain TIE-1).